Reading from the N-terminus, the 595-residue chain is Proline--tRNA ligase (595 aa).

Belongs to the class-II aminoacyl-tRNA synthetase family. ProS type 1 subfamily. As to quaternary structure, homodimer.

It is found in the cytoplasm. It catalyses the reaction tRNA(Pro) + L-proline + ATP = L-prolyl-tRNA(Pro) + AMP + diphosphate. Catalyzes the attachment of proline to tRNA(Pro) in a two-step reaction: proline is first activated by ATP to form Pro-AMP and then transferred to the acceptor end of tRNA(Pro). As ProRS can inadvertently accommodate and process non-cognate amino acids such as alanine and cysteine, to avoid such errors it has two additional distinct editing activities against alanine. One activity is designated as 'pretransfer' editing and involves the tRNA(Pro)-independent hydrolysis of activated Ala-AMP. The other activity is designated 'posttransfer' editing and involves deacylation of mischarged Ala-tRNA(Pro). The misacylated Cys-tRNA(Pro) is not edited by ProRS. This Treponema denticola (strain ATCC 35405 / DSM 14222 / CIP 103919 / JCM 8153 / KCTC 15104) protein is Proline--tRNA ligase.